Reading from the N-terminus, the 574-residue chain is Craniofacial development protein 2 (574 aa).

Composition is skewed to basic and acidic residues over residues methionine 1–aspartate 16, glutamate 23–glutamate 37, glutamate 45–glutamate 55, serine 86–glutamate 111, and threonine 134–glutamine 172. Disordered stretches follow at residues methionine 1–aspartate 222 and threonine 488–phenylalanine 574. The segment covering lysine 199 to asparagine 208 has biased composition (polar residues). Residues glycine 493–glycine 572 are hydrophilic. The span at glutamate 502–proline 516 shows a compositional bias: basic and acidic residues. Positions alanine 518 to proline 528 are enriched in low complexity.

Its subcellular location is the cytoplasm. The protein resides in the nucleus. The protein is Craniofacial development protein 2 (CFDP2) of Tragulus javanicus (Lesser Malay chevrotain).